The chain runs to 434 residues: Zinc finger and BTB domain-containing protein 8A (434 aa).

A BTB domain is found at 24–92; sequence CDCSILVEGK…VYSGKLSLTG (69 aa). Positions 134–238 are disordered; it reads SLSDKDTGSN…SGNHVSQSEE (105 aa). 2 positions are modified to phosphoserine: S161 and S167. Residues K172, K176, and K193 each participate in a glycyl lysine isopeptide (Lys-Gly) (interchain with G-Cter in SUMO2) cross-link. A compositionally biased stretch (basic and acidic residues) spans 192 to 202; it reads AKHEQRKEPSK. The segment covering 226–238 has biased composition (polar residues); it reads QTDSGNHVSQSEE. 2 consecutive C2H2-type zinc fingers follow at residues 275-297 and 303-326; these read FKCPFCTHVVKRKADLKRHLRCH and YPCQACGKRFSRLDHLSSHFRTIH. Residue K430 forms a Glycyl lysine isopeptide (Lys-Gly) (interchain with G-Cter in SUMO2) linkage.

It is found in the nucleus. In terms of biological role, may be involved in transcriptional regulation. The sequence is that of Zinc finger and BTB domain-containing protein 8A (Zbtb8a) from Mus musculus (Mouse).